Here is a 362-residue protein sequence, read N- to C-terminus: MTMRIFNFSPGPATLPEPVLRQAQDEMLEWNAVGASVMEISHRTVEFMELAKGIESDLRCLLGVPDDYAVLFLSGGATTQQALLPLNFAAPGQTADYVVTGHWSKTALKQASPYVNINVVADGERGGFQHIPSRAGWRLSKDAAYVHMTANETIHGVEFRQTPDVGDVPLFADFSSSIAADLIDVSKYDLIYAGAQKNLGPVGICVVIVRRTLLERTGQPRADIFTYASHAERDSMLNTPPTFNWYLLGLTVKWMLAEGGVQEFARRNQAKAQLVYQTIDQSGGFYRNGVAAAVRSRMNIPFFLPNVEQDARFAAEAKAAGLLSLKGHKALGGIRASLYNAMPLAGVQALVAFMHDFQQRYG.

Arg-43 serves as a coordination point for L-glutamate. Residues 77–78, Trp-103, Thr-153, Asp-173, and Gln-196 contribute to the pyridoxal 5'-phosphate site; that span reads AT. Lys-197 is subject to N6-(pyridoxal phosphate)lysine. 238–239 serves as a coordination point for pyridoxal 5'-phosphate; that stretch reads NT.

Belongs to the class-V pyridoxal-phosphate-dependent aminotransferase family. SerC subfamily. Homodimer. Requires pyridoxal 5'-phosphate as cofactor.

Its subcellular location is the cytoplasm. It catalyses the reaction O-phospho-L-serine + 2-oxoglutarate = 3-phosphooxypyruvate + L-glutamate. The catalysed reaction is 4-(phosphooxy)-L-threonine + 2-oxoglutarate = (R)-3-hydroxy-2-oxo-4-phosphooxybutanoate + L-glutamate. Its pathway is amino-acid biosynthesis; L-serine biosynthesis; L-serine from 3-phospho-D-glycerate: step 2/3. The protein operates within cofactor biosynthesis; pyridoxine 5'-phosphate biosynthesis; pyridoxine 5'-phosphate from D-erythrose 4-phosphate: step 3/5. Its function is as follows. Catalyzes the reversible conversion of 3-phosphohydroxypyruvate to phosphoserine and of 3-hydroxy-2-oxo-4-phosphonooxybutanoate to phosphohydroxythreonine. The protein is Phosphoserine aminotransferase of Xylella fastidiosa (strain 9a5c).